A 238-amino-acid polypeptide reads, in one-letter code: Small ribosomal subunit protein eS4 (238 aa).

The S4 RNA-binding domain maps to 38–109 (IPLALVIRDV…DERSYYALVP (72 aa)).

It belongs to the eukaryotic ribosomal protein eS4 family.

The polypeptide is Small ribosomal subunit protein eS4 (Pyrobaculum neutrophilum (strain DSM 2338 / JCM 9278 / NBRC 100436 / V24Sta) (Thermoproteus neutrophilus)).